The chain runs to 271 residues: ATP synthase subunit a (271 aa).

The next 5 membrane-spanning stretches (helical) occupy residues 38–58 (FWTLNIDSMFFSVVLGLLFLA), 100–120 (VIAPLALTVFVWVFLMNLMDL), 146–166 (DVNITLSMALGVFILIIFYSI), 211–231 (LFGNMYAGELIFILIAGLLPW), and 242–262 (AIFHILIITLQAFIFMVLTIV).

This sequence belongs to the ATPase A chain family. F-type ATPases have 2 components, CF(1) - the catalytic core - and CF(0) - the membrane proton channel. CF(1) has five subunits: alpha(3), beta(3), gamma(1), delta(1), epsilon(1). CF(0) has three main subunits: a(1), b(2) and c(9-12). The alpha and beta chains form an alternating ring which encloses part of the gamma chain. CF(1) is attached to CF(0) by a central stalk formed by the gamma and epsilon chains, while a peripheral stalk is formed by the delta and b chains.

The protein localises to the cell inner membrane. Key component of the proton channel; it plays a direct role in the translocation of protons across the membrane. This chain is ATP synthase subunit a, found in Klebsiella pneumoniae (strain 342).